Reading from the N-terminus, the 130-residue chain is Glycine cleavage system H protein (130 aa).

Residues 25-106 form the Lipoyl-binding domain; it reads MALIGISDFA…PFDSWMIKVK (82 aa). The residue at position 66 (K66) is an N6-lipoyllysine.

It belongs to the GcvH family. The glycine cleavage system is composed of four proteins: P, T, L and H. The cofactor is (R)-lipoate.

The glycine cleavage system catalyzes the degradation of glycine. The H protein shuttles the methylamine group of glycine from the P protein to the T protein. In Leptospira interrogans serogroup Icterohaemorrhagiae serovar copenhageni (strain Fiocruz L1-130), this protein is Glycine cleavage system H protein.